The chain runs to 512 residues: MKKTTLLVILDGWGYSESDYFNAIKNANTPTWDSIWQDFPRTLISASSLEVGLPRGQMGNSEVGHVNIGCGRVVYQELTKIDKAIEEKTFGNNKAICDAIDNVIQKDSNLHLMGLLSPGGVHSHEEHIFEMIKIAKQKGVKRVYLHAFLDGRDTPPRSAESSIKKTDDLLQKLNLGYIASVSGRYYAMDRDNRWDRVEKAYNAIVNADAEFVCNSALEALEESYARDQSDEFVIPTCIQKDGKLIKVEDNDSVIFMNFRADRAREISHAFTDENFDHFPKDRHLNINFTTLTEYDSKLKCNVAFPPEQPVNTLGEVLMKNHKTQLRIAETEKYPHVTFFFNGGKEDQFEGEDRILIPSPKVATYDLQPEMSAPEVTDKLVDAINNGKYDCIVCNYANSDMVGHTGNYEAAMQAIEYLDKCLARLKDAILEHDGNMFITADHGNADMMVNPKTQKPHTAHTTNLVPFVYVGHKKAQVALEHGKLSDIAPTILNVMNIAQPQEMTGKTIFKFEK.

Residues Asp-11 and Ser-61 each contribute to the Mn(2+) site. Catalysis depends on Ser-61, which acts as the Phosphoserine intermediate. Substrate is bound by residues His-122, 152 to 153 (RD), Arg-184, Arg-190, 259 to 262 (RADR), and Lys-332. The Mn(2+) site is built by Asp-399, His-403, Asp-440, His-441, and His-459.

The protein belongs to the BPG-independent phosphoglycerate mutase family. As to quaternary structure, monomer. Requires Mn(2+) as cofactor.

The catalysed reaction is (2R)-2-phosphoglycerate = (2R)-3-phosphoglycerate. Its pathway is carbohydrate degradation; glycolysis; pyruvate from D-glyceraldehyde 3-phosphate: step 3/5. Functionally, catalyzes the interconversion of 2-phosphoglycerate and 3-phosphoglycerate. This chain is 2,3-bisphosphoglycerate-independent phosphoglycerate mutase, found in Francisella philomiragia subsp. philomiragia (strain ATCC 25017 / CCUG 19701 / FSC 153 / O#319-036).